We begin with the raw amino-acid sequence, 246 residues long: 3'(2'),5'-bisphosphate nucleotidase CysQ (246 aa).

Glutamate 64, aspartate 83, leucine 85, aspartate 86, and aspartate 205 together coordinate Mg(2+). Glutamate 64 contacts substrate. Substrate-binding positions include 85-88 (LDGT) and aspartate 205.

The protein belongs to the inositol monophosphatase superfamily. CysQ family. Mg(2+) serves as cofactor.

It localises to the cell inner membrane. It catalyses the reaction adenosine 3',5'-bisphosphate + H2O = AMP + phosphate. Its function is as follows. Converts adenosine-3',5'-bisphosphate (PAP) to AMP. The protein is 3'(2'),5'-bisphosphate nucleotidase CysQ of Salmonella typhimurium (strain LT2 / SGSC1412 / ATCC 700720).